A 170-amino-acid chain; its full sequence is Flavodoxin (170 aa).

Residues isoleucine 4–lysine 165 enclose the Flavodoxin-like domain.

This sequence belongs to the flavodoxin family. The cofactor is FMN.

Functionally, low-potential electron donor to a number of redox enzymes. The chain is Flavodoxin (isiB) from Synechocystis sp. (strain ATCC 27184 / PCC 6803 / Kazusa).